Reading from the N-terminus, the 189-residue chain is Apolipoprotein D (189 aa).

The first 20 residues, 1–20, serve as a signal peptide directing secretion; sequence MVTMLMFLATLAGLFTTAKG. Gln-21 carries the pyrrolidone carboxylic acid modification. Intrachain disulfides connect Cys-28/Cys-134 and Cys-61/Cys-185. N-linked (GlcNAc...) asparagine glycosylation is found at Asn-65 and Asn-98.

This sequence belongs to the calycin superfamily. Lipocalin family. Homodimer. Highest levels of expression in brain, testis, virgin mammary gland and salivary gland. Moderate levels in skeletal muscle, lactating mammary gland and thymus. Low levels in lung and lymph node. No expression in kidney, pancreas, liver or spleen.

It is found in the secreted. APOD occurs in the macromolecular complex with lecithin-transport and binding of bilin. Appears to be able to transport a variety of ligands in a number of different contexts. This is Apolipoprotein D (Apod) from Mus musculus (Mouse).